Reading from the N-terminus, the 179-residue chain is Translation initiation factor IF-3 (179 aa).

Belongs to the IF-3 family. Monomer.

Its subcellular location is the cytoplasm. Its function is as follows. IF-3 binds to the 30S ribosomal subunit and shifts the equilibrium between 70S ribosomes and their 50S and 30S subunits in favor of the free subunits, thus enhancing the availability of 30S subunits on which protein synthesis initiation begins. The protein is Translation initiation factor IF-3 of Leptospira interrogans serogroup Icterohaemorrhagiae serovar copenhageni (strain Fiocruz L1-130).